The following is a 198-amino-acid chain: Inner membrane-spanning protein YciB (198 aa).

5 helical membrane-spanning segments follow: residues 36-56, 67-87, 90-110, 133-153, and 162-182; these read IFSA…ILYL, LTLV…SETF, WKAP…HFIG, LNIA…YVAF, and FKVF…GIYL.

It belongs to the YciB family.

It is found in the cell inner membrane. Plays a role in cell envelope biogenesis, maintenance of cell envelope integrity and membrane homeostasis. The chain is Inner membrane-spanning protein YciB from Pseudomonas savastanoi pv. phaseolicola (strain 1448A / Race 6) (Pseudomonas syringae pv. phaseolicola (strain 1448A / Race 6)).